The chain runs to 881 residues: Probable intermembrane transport protein HI_1672 (881 aa).

Residues 30 to 49 (FWLLPFIALCIGAILFFQIV) form a helical membrane-spanning segment.

This sequence belongs to the PqiB family.

The protein localises to the cell inner membrane. In Haemophilus influenzae (strain ATCC 51907 / DSM 11121 / KW20 / Rd), this protein is Probable intermembrane transport protein HI_1672.